We begin with the raw amino-acid sequence, 73 residues long: MVLGLALGLSIPLCLIVGAFVGYFVSMKVFKRQMRKNPPITEAQIRSLYAQMGRKPSEAQVKQMMRAYTKETK.

A helical transmembrane segment spans residues 5–25; the sequence is LALGLSIPLCLIVGAFVGYFV.

It belongs to the UPF0154 family.

The protein resides in the membrane. The sequence is that of UPF0154 protein MYCGA5700 from Mycoplasmoides gallisepticum (strain R(low / passage 15 / clone 2)) (Mycoplasma gallisepticum).